The primary structure comprises 98 residues: Sarcosine oxidase subunit delta (98 aa).

Zn(2+) contacts are provided by cysteine 6, cysteine 9, histidine 59, and cysteine 63.

This sequence belongs to the SoxD family. Heterotetramer composed of subunits alpha (SoxA), beta (SoxB), gamma (SoxG) and delta (SoxD).

It is found in the cytoplasm. The enzyme catalyses sarcosine + (6S)-5,6,7,8-tetrahydrofolate + O2 = (6R)-5,10-methylene-5,6,7,8-tetrahydrofolate + glycine + H2O2. It carries out the reaction sarcosine + O2 + H2O = formaldehyde + glycine + H2O2. Its function is as follows. In the presence of tetrahydrofolate, catalyzes the oxidative demethylation of sarcosine to yield glycine, 5,10-methylenetetrahydrofolate and hydrogen peroxide. In the absence of tetrahydrofolate, catalyzes the oxidative demethylation of sarcosine to yield glycine, formaldehyde and hydrogen peroxide. The chain is Sarcosine oxidase subunit delta from Corynebacterium sp. (strain P-1).